The primary structure comprises 389 residues: S-adenosylmethionine synthase (389 aa).

His-19 contributes to the ATP binding site. A Mg(2+)-binding site is contributed by Asp-21. Glu-47 contributes to the K(+) binding site. Residues Glu-60 and Gln-103 each contribute to the L-methionine site. Residues 103–113 (QSVDIAQGVDR) form a flexible loop region. Residues 168 to 170 (DGK), 234 to 235 (RF), Asp-243, 249 to 250 (RK), Ala-266, and Lys-270 contribute to the ATP site. Asp-243 is a binding site for L-methionine. L-methionine is bound at residue Lys-274.

This sequence belongs to the AdoMet synthase family. In terms of assembly, homotetramer; dimer of dimers. The cofactor is Mg(2+). Requires K(+) as cofactor.

It is found in the cytoplasm. It carries out the reaction L-methionine + ATP + H2O = S-adenosyl-L-methionine + phosphate + diphosphate. It participates in amino-acid biosynthesis; S-adenosyl-L-methionine biosynthesis; S-adenosyl-L-methionine from L-methionine: step 1/1. Functionally, catalyzes the formation of S-adenosylmethionine (AdoMet) from methionine and ATP. The overall synthetic reaction is composed of two sequential steps, AdoMet formation and the subsequent tripolyphosphate hydrolysis which occurs prior to release of AdoMet from the enzyme. The polypeptide is S-adenosylmethionine synthase (Maridesulfovibrio salexigens (strain ATCC 14822 / DSM 2638 / NCIMB 8403 / VKM B-1763) (Desulfovibrio salexigens)).